The sequence spans 542 residues: Valine N-monooxygenase 1 (542 aa).

Topologically, residues 1–21 (MAMNVSTTIGLLNATSFASSS) are cytoplasmic. A helical; Signal-anchor for type II membrane protein transmembrane segment spans residues 22–42 (SINTVKILFVTLFISIVSTIV). The Lumenal portion of the chain corresponds to 43-542 (KLQKSAANKE…LAPHLYPTSP (500 aa)). N-linked (GlcNAc...) asparagine glycosylation occurs at asparagine 278. Residue cysteine 478 coordinates heme. N-linked (GlcNAc...) asparagine glycosylation occurs at asparagine 506.

It belongs to the cytochrome P450 family. Heme is required as a cofactor. Expressed in the epidermis, the next two cortex cell layers, the endodermis and the pericycle of leaf petioles. Strong expression around the laticifers among the phloem cells and in parenchymatic cells between the protoxylem and the metaxylem cells. In the leaves, preferentially expressed in the mesophyll cells adjacent to the epidermis.

The protein resides in the microsome membrane. The catalysed reaction is L-valine + 2 reduced [NADPH--hemoprotein reductase] + 2 O2 = (E)-2-methylpropanal oxime + 2 oxidized [NADPH--hemoprotein reductase] + CO2 + 3 H2O + 2 H(+). The enzyme catalyses L-valine + reduced [NADPH--hemoprotein reductase] + O2 = N-hydroxy-L-valine + oxidized [NADPH--hemoprotein reductase] + H2O + 2 H(+). It carries out the reaction N-hydroxy-L-valine + reduced [NADPH--hemoprotein reductase] + O2 = N,N-dihydroxy-L-valine + oxidized [NADPH--hemoprotein reductase] + H2O + H(+). It catalyses the reaction L-isoleucine + 2 reduced [NADPH--hemoprotein reductase] + 2 O2 = (1E,2S)-2-methylbutanal oxime + 2 oxidized [NADPH--hemoprotein reductase] + CO2 + 3 H2O + 2 H(+). The catalysed reaction is L-isoleucine + reduced [NADPH--hemoprotein reductase] + O2 = N-hydroxy-L-isoleucine + oxidized [NADPH--hemoprotein reductase] + H2O + 2 H(+). The enzyme catalyses N-hydroxy-L-isoleucine + reduced [NADPH--hemoprotein reductase] + O2 = N,N-dihydroxy-L-isoleucine + oxidized [NADPH--hemoprotein reductase] + H2O + H(+). Its pathway is secondary metabolite biosynthesis. Inhibited by tetcyclasis but not by 1-aminobenzotriazole (ABT). Involved in the biosynthesis of the cyanogenic glucosides linamarin and lotaustralin. Can use L-valine or L-isoleucine as substrate, but not L-leucine, L-phenylalanine, L-tyrosine, D-valine or D-isoleucine. Catalyzes multi-step reactions starting with two successive N-hydroxylations using L-valine and L-isoleucine as substrates leading to the formation of N,N-dihydroxy-L-valine and N,N-dihydroxy-L-isoleucine, respectively; following spontaneous reactions lead to the production of (E)-2-methylpropanal oxime and (1E,2S)-2-methylbutanal oxime, respectively. This chain is Valine N-monooxygenase 1, found in Manihot esculenta (Cassava).